A 66-amino-acid polypeptide reads, in one-letter code: ATP synthase protein 8 (66 aa).

The helical transmembrane segment at Pro8–Thr24 threads the bilayer. Lys54 bears the N6-acetyllysine; alternate mark. Position 54 is an N6-succinyllysine; alternate (Lys54). Lys57 bears the N6-acetyllysine mark.

Belongs to the ATPase protein 8 family. F-type ATPases have 2 components, CF(1) - the catalytic core - and CF(0) - the membrane proton channel. Component of an ATP synthase complex composed of ATP5PB, ATP5MC1, ATP5F1E, ATP5PD, ATP5ME, ATP5PF, ATP5MF, MT-ATP6, MT-ATP8, ATP5F1A, ATP5F1B, ATP5F1D, ATP5F1C, ATP5PO, ATP5MG, ATP5MK and ATP5MJ. Interacts with PRICKLE3.

Its subcellular location is the mitochondrion membrane. Functionally, mitochondrial membrane ATP synthase (F(1)F(0) ATP synthase or Complex V) produces ATP from ADP in the presence of a proton gradient across the membrane which is generated by electron transport complexes of the respiratory chain. F-type ATPases consist of two structural domains, F(1) - containing the extramembraneous catalytic core and F(0) - containing the membrane proton channel, linked together by a central stalk and a peripheral stalk. During catalysis, ATP synthesis in the catalytic domain of F(1) is coupled via a rotary mechanism of the central stalk subunits to proton translocation. Part of the complex F(0) domain. Minor subunit located with subunit a in the membrane. This Alouatta sara (Bolivian red howler monkey) protein is ATP synthase protein 8 (MT-ATP8).